Consider the following 426-residue polypeptide: Serine--tRNA ligase (426 aa).

233–235 provides a ligand contact to L-serine; it reads TAE. 264–266 provides a ligand contact to ATP; the sequence is RSE. Glu287 serves as a coordination point for L-serine. Position 351-354 (351-354) interacts with ATP; the sequence is EISS. Residue Ser387 coordinates L-serine.

This sequence belongs to the class-II aminoacyl-tRNA synthetase family. Type-1 seryl-tRNA synthetase subfamily. As to quaternary structure, homodimer. The tRNA molecule binds across the dimer.

The protein resides in the cytoplasm. The catalysed reaction is tRNA(Ser) + L-serine + ATP = L-seryl-tRNA(Ser) + AMP + diphosphate + H(+). The enzyme catalyses tRNA(Sec) + L-serine + ATP = L-seryl-tRNA(Sec) + AMP + diphosphate + H(+). It functions in the pathway aminoacyl-tRNA biosynthesis; selenocysteinyl-tRNA(Sec) biosynthesis; L-seryl-tRNA(Sec) from L-serine and tRNA(Sec): step 1/1. Catalyzes the attachment of serine to tRNA(Ser). Is also able to aminoacylate tRNA(Sec) with serine, to form the misacylated tRNA L-seryl-tRNA(Sec), which will be further converted into selenocysteinyl-tRNA(Sec). The sequence is that of Serine--tRNA ligase from Pseudomonas syringae pv. syringae (strain B728a).